Here is a 184-residue protein sequence, read N- to C-terminus: Putative pre-16S rRNA nuclease (184 aa).

The interval 1–23 (MFSSQHRLLYQPSGPDLSKNLDP) is disordered.

The protein belongs to the YqgF nuclease family.

The protein resides in the cytoplasm. Its function is as follows. Could be a nuclease involved in processing of the 5'-end of pre-16S rRNA. This chain is Putative pre-16S rRNA nuclease, found in Mycobacterium leprae (strain Br4923).